A 264-amino-acid polypeptide reads, in one-letter code: DNA repair protein RecO (264 aa).

It belongs to the RecO family.

Involved in DNA repair and RecF pathway recombination. This is DNA repair protein RecO from Chlorobium luteolum (strain DSM 273 / BCRC 81028 / 2530) (Pelodictyon luteolum).